Consider the following 1400-residue polypeptide: DNA-directed RNA polymerase subunit beta' (1400 aa).

Zn(2+) is bound by residues Cys-71, Cys-73, Cys-86, and Cys-89. Mg(2+)-binding residues include Asp-462, Asp-464, and Asp-466. Zn(2+) contacts are provided by Cys-820, Cys-893, Cys-900, and Cys-903.

The protein belongs to the RNA polymerase beta' chain family. As to quaternary structure, the RNAP catalytic core consists of 2 alpha, 1 beta, 1 beta' and 1 omega subunit. When a sigma factor is associated with the core the holoenzyme is formed, which can initiate transcription. Requires Mg(2+) as cofactor. It depends on Zn(2+) as a cofactor.

The enzyme catalyses RNA(n) + a ribonucleoside 5'-triphosphate = RNA(n+1) + diphosphate. Its function is as follows. DNA-dependent RNA polymerase catalyzes the transcription of DNA into RNA using the four ribonucleoside triphosphates as substrates. The chain is DNA-directed RNA polymerase subunit beta' from Methylobacterium sp. (strain 4-46).